The primary structure comprises 139 residues: Actin-depolymerizing factor 6 (139 aa).

The 135-residue stretch at 5–139 (ASGMAVGDEC…SMDIVKARAL (135 aa)) folds into the ADF-H domain.

This sequence belongs to the actin-binding proteins ADF family.

Its function is as follows. Actin-depolymerizing protein. Severs actin filaments (F-actin) and binds to actin monomers. This chain is Actin-depolymerizing factor 6 (ADF6), found in Oryza sativa subsp. japonica (Rice).